We begin with the raw amino-acid sequence, 491 residues long: Cobyric acid synthase (491 aa).

The GATase cobBQ-type domain maps to 250 to 441; the sequence is DLQITVVRLP…LHGLFDNGPW (192 aa). The Nucleophile role is filled by Cys331. The active site involves His433.

The protein belongs to the CobB/CobQ family. CobQ subfamily.

It participates in cofactor biosynthesis; adenosylcobalamin biosynthesis. Catalyzes amidations at positions B, D, E, and G on adenosylcobyrinic A,C-diamide. NH(2) groups are provided by glutamine, and one molecule of ATP is hydrogenolyzed for each amidation. The chain is Cobyric acid synthase from Trichormus variabilis (strain ATCC 29413 / PCC 7937) (Anabaena variabilis).